The chain runs to 731 residues: Auxin response factor 3 (731 aa).

Residues 1-22 show a composition bias toward low complexity; sequence MASSASSSSSPSSRPPLMALPS. The tract at residues 1-41 is disordered; it reads MASSASSSSSPSSRPPLMALPSFYRPPWPSERGGEQRATDC. A DNA-binding region (TF-B3) is located at residues 191 to 293; sequence FCKTLTASDT…ELRLGVRRAT (103 aa).

This sequence belongs to the ARF family. Homo and heterodimers. As to expression, expressed in roots, culms, leaves and young panicles.

The protein localises to the nucleus. In terms of biological role, auxin response factors (ARFs) are transcriptional factors that bind specifically to the DNA sequence 5'-TGTCTC-3' found in the auxin-responsive promoter elements (AuxREs). The polypeptide is Auxin response factor 3 (ARF3) (Oryza sativa subsp. japonica (Rice)).